Consider the following 305-residue polypeptide: Plant-type L-asparaginase (305 aa).

Catalysis depends on Thr-175, which acts as the Nucleophile. Residues 202–205 (RVGD) and 224–227 (TGLG) contribute to the substrate site.

It belongs to the Ntn-hydrolase family. As to quaternary structure, heterotetramer of two alpha and two beta chains arranged as a dimer of alpha/beta heterodimers. The uncleaved protein forms homodimers. Autocleaved. Generates the alpha and beta subunits. The N-terminal residue of the beta subunit is thought to be responsible for the nucleophile hydrolase activity.

It carries out the reaction L-asparagine + H2O = L-aspartate + NH4(+). Functionally, catalyzes the hydrolysis of L-asparagine into L-aspartate and ammonia. Does not exhibit glutaminase activity. This is Plant-type L-asparaginase from Pyrococcus abyssi (strain GE5 / Orsay).